Consider the following 338-residue polypeptide: Selenocysteine methyltransferase (338 aa).

The Hcy-binding domain maps to 1–327 (MSSPLITDFL…DTIRGIYKIL (327 aa)). 3 residues coordinate Zn(2+): Cys245, Cys312, and Cys313.

As to quaternary structure, monomer. The cofactor is Zn(2+). As to expression, present in all tissues tested.

The catalysed reaction is S-methyl-L-methionine + L-selenocysteine = Se-methyl-L-selenocysteine + L-methionine + H(+). Catalyzes the methylation of selenocysteine with S-methylmethionine as donor. Does not methylate cysteine. The chain is Selenocysteine methyltransferase (SMTA) from Astragalus bisulcatus (Two-grooved milkvetch).